A 528-amino-acid polypeptide reads, in one-letter code: Abrin-a (528 aa).

A Pyrrolidone carboxylic acid modification is found at Q1. E164 is a catalytic residue. 3 disulfides stabilise this stretch: C247/C269, C286/C305, and C329/C346. The Ricin B-type lectin 1 domain maps to 273 to 400; that stretch reads YEPTVRIGGR…YLMRQGWRTG (128 aa). Residues 283–325 form a 1-alpha repeat; that stretch reads DGMCVDVYDNGYHNGNRIIMWKCKDRLEENQLWTLKSDKTIRS. The 1-beta repeat unit spans residues 326-366; it reads NGKCLTTYGYAPGSYVMIYDCTSAVAEATYWEIWDNGTIIN. N-linked (GlcNAc...) asparagine glycans are attached at residues N361 and N401. Residues 369 to 401 form a 1-gamma repeat; the sequence is SALVLSAESSSMGGTLTVQTNEYLMRQGWRTGN. In terms of domain architecture, Ricin B-type lectin 2 spans 403 to 527; it reads TSPFVTSISG…GKPNQIWLTL (125 aa). A 2-alpha repeat occupies 414 to 449; the sequence is SDLCMQAQGSNVWMADCDSNKKEQQWALYTDGSIRS. 2 disulfides stabilise this stretch: C417–C430 and C456–C473. One copy of the 2-beta repeat lies at 453-492; it reads TNNCLTSKDHKQGSTILLMGCSNGWASQRWVFKNDGSIYS. Residues 495 to 528 form a 2-gamma repeat; it reads DDMVMDVKGSDPSLKQIILWPYTGKPNQIWLTLF.

It in the N-terminal section; belongs to the ribosome-inactivating protein family. Type 2 RIP subfamily. In terms of assembly, disulfide-linked dimer of A and B chains.

It catalyses the reaction Endohydrolysis of the N-glycosidic bond at one specific adenosine on the 28S rRNA.. Its function is as follows. The A chain is responsible for inhibiting protein synthesis through the catalytic inactivation of 60S ribosomal subunits by removing adenine from position 4,324 of 28S rRNA. Abrin-a is more toxic than ricin. The B chain is a galactose-specific lectin that facilitates the binding of abrin to the cell membrane that precedes endocytosis. The protein is Abrin-a of Abrus precatorius (Indian licorice).